A 316-amino-acid polypeptide reads, in one-letter code: Glucan endo-1,3-beta-glucosidase GV (316 aa).

E99 acts as the Proton donor in catalysis. E239 functions as the Nucleophile in the catalytic mechanism.

It belongs to the glycosyl hydrolase 17 family.

Its subcellular location is the cytoplasm. It carries out the reaction Hydrolysis of (1-&gt;3)-beta-D-glucosidic linkages in (1-&gt;3)-beta-D-glucans.. Its function is as follows. May provide a degree of protection against microbial invasion of germinated barley grain through its ability to degrade fungal cell wall polysaccharides. The sequence is that of Glucan endo-1,3-beta-glucosidase GV from Hordeum vulgare (Barley).